Reading from the N-terminus, the 485-residue chain is tRNA sulfurtransferase (485 aa).

The THUMP domain occupies 61-165; sequence EELIALLQRI…DDKMMLVKTR (105 aa). ATP contacts are provided by residues 183–184, lysine 265, glycine 287, and glutamine 296; that span reads LI. Cysteine 344 and cysteine 456 are oxidised to a cystine. In terms of domain architecture, Rhodanese spans 404–483; it reads LGENEVILDI…FSNVRVFAKN (80 aa). Residue cysteine 456 is the Cysteine persulfide intermediate of the active site.

The protein belongs to the ThiI family.

The protein resides in the cytoplasm. The enzyme catalyses [ThiI sulfur-carrier protein]-S-sulfanyl-L-cysteine + a uridine in tRNA + 2 reduced [2Fe-2S]-[ferredoxin] + ATP + H(+) = [ThiI sulfur-carrier protein]-L-cysteine + a 4-thiouridine in tRNA + 2 oxidized [2Fe-2S]-[ferredoxin] + AMP + diphosphate. It catalyses the reaction [ThiS sulfur-carrier protein]-C-terminal Gly-Gly-AMP + S-sulfanyl-L-cysteinyl-[cysteine desulfurase] + AH2 = [ThiS sulfur-carrier protein]-C-terminal-Gly-aminoethanethioate + L-cysteinyl-[cysteine desulfurase] + A + AMP + 2 H(+). The protein operates within cofactor biosynthesis; thiamine diphosphate biosynthesis. Functionally, catalyzes the ATP-dependent transfer of a sulfur to tRNA to produce 4-thiouridine in position 8 of tRNAs, which functions as a near-UV photosensor. Also catalyzes the transfer of sulfur to the sulfur carrier protein ThiS, forming ThiS-thiocarboxylate. This is a step in the synthesis of thiazole, in the thiamine biosynthesis pathway. The sulfur is donated as persulfide by IscS. The polypeptide is tRNA sulfurtransferase (Haemophilus influenzae (strain 86-028NP)).